Consider the following 529-residue polypeptide: Bifunctional purine biosynthesis protein PurH (529 aa).

An MGS-like domain is found at 1 to 148 (MQQPRPIRRA…KNHKDVAIVV (148 aa)).

This sequence belongs to the PurH family.

It carries out the reaction (6R)-10-formyltetrahydrofolate + 5-amino-1-(5-phospho-beta-D-ribosyl)imidazole-4-carboxamide = 5-formamido-1-(5-phospho-D-ribosyl)imidazole-4-carboxamide + (6S)-5,6,7,8-tetrahydrofolate. The enzyme catalyses IMP + H2O = 5-formamido-1-(5-phospho-D-ribosyl)imidazole-4-carboxamide. The protein operates within purine metabolism; IMP biosynthesis via de novo pathway; 5-formamido-1-(5-phospho-D-ribosyl)imidazole-4-carboxamide from 5-amino-1-(5-phospho-D-ribosyl)imidazole-4-carboxamide (10-formyl THF route): step 1/1. It participates in purine metabolism; IMP biosynthesis via de novo pathway; IMP from 5-formamido-1-(5-phospho-D-ribosyl)imidazole-4-carboxamide: step 1/1. The sequence is that of Bifunctional purine biosynthesis protein PurH from Serratia proteamaculans (strain 568).